The chain runs to 248 residues: Probable transcriptional regulatory protein BH14810 (248 aa).

The protein belongs to the TACO1 family.

The protein resides in the cytoplasm. The chain is Probable transcriptional regulatory protein BH14810 from Bartonella henselae (strain ATCC 49882 / DSM 28221 / CCUG 30454 / Houston 1) (Rochalimaea henselae).